The following is a 425-amino-acid chain: SWI5-dependent HO expression protein 3 (425 aa).

The disordered stretch occupies residues 24–45 (NLESSPTKDRNTSSQNASSSRV). Residues 35-45 (TSSQNASSSRV) are compositionally biased toward polar residues. Positions 68–197 (QNLLSKLELA…LELSNQNLNY (130 aa)) form a coiled coil. The disordered stretch occupies residues 322-425 (RKTPNTNDSS…NSMVVHGAQS (104 aa)). A compositionally biased stretch (low complexity) spans 326–338 (NTNDSSSNGNSSN). S343 is modified (phosphoserine). Composition is skewed to polar residues over residues 345–358 (YTAS…SIPK) and 382–397 (KTNV…SPTI). S394 carries the phosphoserine modification.

This sequence belongs to the SHE3 family. Interacts with SHE2 and MYO4.

It localises to the endoplasmic reticulum membrane. Its function is as follows. RNA-binding protein that binds specific mRNAs including the ASH1 mRNA, coding for a repressor of the HO endonuclease. Part of the mRNA localization machinery that restricts accumulation of certain proteins to the bud and in the daughter cell. Required for the delivery of cortical endoplasmic reticulum into the emerging bud. This Saccharomyces cerevisiae (strain ATCC 204508 / S288c) (Baker's yeast) protein is SWI5-dependent HO expression protein 3 (SHE3).